Here is a 314-residue protein sequence, read N- to C-terminus: Ribonuclease Z (314 aa).

Positions 62, 64, 66, 67, 139, 210, and 268 each coordinate Zn(2+). The active-site Proton acceptor is Asp66.

The protein belongs to the RNase Z family. Homodimer. It depends on Zn(2+) as a cofactor.

It catalyses the reaction Endonucleolytic cleavage of RNA, removing extra 3' nucleotides from tRNA precursor, generating 3' termini of tRNAs. A 3'-hydroxy group is left at the tRNA terminus and a 5'-phosphoryl group is left at the trailer molecule.. Zinc phosphodiesterase, which displays some tRNA 3'-processing endonuclease activity. Probably involved in tRNA maturation, by removing a 3'-trailer from precursor tRNA. The polypeptide is Ribonuclease Z (Acaryochloris marina (strain MBIC 11017)).